A 40-amino-acid chain; its full sequence is Large ribosomal subunit protein bL36B (40 aa).

This sequence belongs to the bacterial ribosomal protein bL36 family.

This Kocuria rhizophila (strain ATCC 9341 / DSM 348 / NBRC 103217 / DC2201) protein is Large ribosomal subunit protein bL36B.